Here is a 503-residue protein sequence, read N- to C-terminus: Glutamate--tRNA ligase 1 (503 aa).

The short motif at proline 17 to asparagine 27 is the 'HIGH' region element. Residues lysine 261–arginine 265 carry the 'KMSKS' region motif. Lysine 264 provides a ligand contact to ATP.

The protein belongs to the class-I aminoacyl-tRNA synthetase family. Glutamate--tRNA ligase type 1 subfamily. Monomer.

It is found in the cytoplasm. The enzyme catalyses tRNA(Glu) + L-glutamate + ATP = L-glutamyl-tRNA(Glu) + AMP + diphosphate. Its function is as follows. Catalyzes the attachment of glutamate to tRNA(Glu) in a two-step reaction: glutamate is first activated by ATP to form Glu-AMP and then transferred to the acceptor end of tRNA(Glu). The sequence is that of Glutamate--tRNA ligase 1 from Levilactobacillus brevis (strain ATCC 367 / BCRC 12310 / CIP 105137 / JCM 1170 / LMG 11437 / NCIMB 947 / NCTC 947) (Lactobacillus brevis).